The sequence spans 273 residues: Glutamate racemase (273 aa).

Substrate-binding positions include 19–20 (DS) and 51–52 (YG). The active-site Proton donor/acceptor is the cysteine 83. 84-85 (NT) contacts substrate. Catalysis depends on cysteine 198, which acts as the Proton donor/acceptor. 199-200 (TH) is a substrate binding site.

Belongs to the aspartate/glutamate racemases family.

The catalysed reaction is L-glutamate = D-glutamate. The protein operates within cell wall biogenesis; peptidoglycan biosynthesis. Its function is as follows. Provides the (R)-glutamate required for cell wall biosynthesis. The chain is Glutamate racemase from Agrobacterium fabrum (strain C58 / ATCC 33970) (Agrobacterium tumefaciens (strain C58)).